Here is a 128-residue protein sequence, read N- to C-terminus: Ferric uptake regulation protein homolog (128 aa).

The protein belongs to the Fur family.

This is Ferric uptake regulation protein homolog from Archaeoglobus fulgidus (strain ATCC 49558 / DSM 4304 / JCM 9628 / NBRC 100126 / VC-16).